Consider the following 593-residue polypeptide: Early nodule-specific protein 2 (593 aa).

A compositionally biased stretch (pro residues) spans 71–110 (EKPPIYEPPPTEEPPPVYKPPIIHPPPNYKPPAHTPPIYH). A disordered region spans residues 71–593 (EKPPIYEPPP…GHYPPYKKNQ (523 aa)). 2 stretches are compositionally biased toward basic and acidic residues: residues 123–138 (PYEK…EYQP) and 166–195 (PPYE…EKPP). Residues 196-210 (PEYTPPYEKPPPEYQ) are compositionally biased toward pro residues. 2 stretches are compositionally biased toward basic and acidic residues: residues 227-265 (PPHE…EKPP) and 275-292 (PPHE…EKPP). Residues 294–306 (VHPPPEYQPPYLK) show a composition bias toward pro residues. 4 stretches are compositionally biased toward basic and acidic residues: residues 339-350 (PPHEKPPHEHPP), 360-372 (PPPE…ENPP), 382-394 (PPHE…EHPP), and 404-421 (PPPE…EHPP). The segment covering 422–435 (PEYQPPQENPPPEY) has biased composition (pro residues). The segment covering 506 to 522 (PRHEKPMPKYQPPHEKL) has biased composition (basic and acidic residues). The segment covering 532 to 558 (KTPPPQAYHPPPPIYHHPPFHPPPHVK) has biased composition (pro residues).

It belongs to the nodulin 75 family.

Functionally, involved in early stages of root nodule development. This Medicago truncatula (Barrel medic) protein is Early nodule-specific protein 2.